Consider the following 148-residue polypeptide: uncharacterized protein (148 aa).

The 62-residue stretch at 3–64 (IDDLDRKILS…KLNYEKLGYE (62 aa)) folds into the HTH asnC-type domain. Positions 22–41 (YREIAKKLNVAVGTIYNRIK) form a DNA-binding region, H-T-H motif.

This is an uncharacterized protein from Pyrococcus furiosus (strain ATCC 43587 / DSM 3638 / JCM 8422 / Vc1).